The following is a 1276-amino-acid chain: Sterol regulatory element-binding protein cleavage-activating protein (1276 aa).

The Cytoplasmic segment spans residues M1–H18. A helical transmembrane segment spans residues G19–A39. The Lumenal segment spans residues C40 to E279. The interval K46 to E284 is loop-1. The tract at residues P60–Q81 is disordered. A glycan (N-linked (GlcNAc...) asparagine) is linked at N263. A helical transmembrane segment spans residues I280–Y300. The SSD domain occupies E284–I442. Residues F301–K312 are Cytoplasmic-facing. The helical transmembrane segment at W313–L333 threads the bilayer. Over C334–N344 the chain is Lumenal. A helical transmembrane segment spans residues G345–T365. Residues K366–G401 lie on the Cytoplasmic side of the membrane. Residues I402–V422 form a helical membrane-spanning segment. V423 is a topological domain (lumenal). The helical transmembrane segment at G424 to I444 threads the bilayer. Residues R445–R518 lie on the Cytoplasmic side of the membrane. Positions M447–L452 match the ER export signal motif. Glycyl lysine isopeptide (Lys-Gly) (interchain with G-Cter in ubiquitin) cross-links involve residues K454 and K466. The chain crosses the membrane as a helical span at residues L519–L539. Positions D535–K710 are loop-7. The Lumenal portion of the chain corresponds to R540–T707. Residues N590 and N641 are each glycosylated (N-linked (GlcNAc...) asparagine). Residues L708–C728 traverse the membrane as a helical segment. The Cytoplasmic segment spans residues L729–D1276. The segment at R731–D1276 is interaction with SREBF2. One copy of the WD 1 repeat lies at V771 to R811. A phosphoserine mark is found at S821, S837, S843, S850, S905, and S934. The disordered stretch occupies residues E834–R903. The segment at S928 to A958 is disordered. WD repeat units lie at residues A949–S999 and E1002–P1039. R1048 bears the Omega-N-methylarginine mark. WD repeat units follow at residues A1074–T1111, G1114–H1152, A1155–S1192, and Q1194–T1232.

This sequence belongs to the WD repeat SCAP family. In terms of assembly, membrane region forms a homotetramer. Component of the SCAP-SREBP complex (composed of SCAP and SREBF1/SREBP1 or SREBF2/SREBP2); interacts with SREBF1/SREBP1 or SREBF2/SREBP2 through its C-terminal cytoplasmic domain. Forms a ternary complex with INSIG1 or INSIG2 through its transmembrane domains at high sterol concentrations. Interacts with PAQR3; the interaction anchors the SCAP-SREBP complex to the Golgi apparatus in low cholesterol conditions. Interacts with the SEC23-SEC24 complex in a SAR1-GTP-dependent manner through an ER export signal in its third cytoplasmic loop. Interacts with RNF139; the interaction inhibits the interaction of SCAP with SEC24B and hampering the ER to Golgi transport of the SCAP-SREBP complex. Interacts with SPRING1. Post-translationally, ubiquitinated at Lys-454 and Lys-466. RNF145 triggers ubiquitination of SCAP, likely inhibiting SCAP-SREBP complex transport to the Golgi apparatus and the subsequent processing/maturation of SREBF2/SREBP2.

Its subcellular location is the endoplasmic reticulum membrane. It is found in the golgi apparatus membrane. It localises to the cytoplasmic vesicle. The protein resides in the COPII-coated vesicle membrane. Escort protein required for cholesterol as well as lipid homeostasis. Regulates export of the SCAP-SREBP complex from the endoplasmic reticulum to the Golgi upon low cholesterol, thereby regulating the processing of sterol regulatory element-binding proteins (SREBPs) SREBF1/SREBP1 and SREBF2/SREBP2. At high sterol concentrations, formation of a ternary complex with INSIG (INSIG1 or INSIG2) leads to mask the ER export signal in SCAP, promoting retention of the complex in the endoplasmic reticulum. Low sterol concentrations trigger release of INSIG, a conformational change in the SSD domain of SCAP, unmasking of the ER export signal, promoting recruitment into COPII-coated vesicles and transport of the SCAP-SREBP to the Golgi: in the Golgi, SREBPs are then processed, releasing the transcription factor fragment of SREBPs from the membrane, its import into the nucleus and up-regulation of LDLR, INSIG1 and the mevalonate pathway. Binds cholesterol via its SSD domain. The sequence is that of Sterol regulatory element-binding protein cleavage-activating protein from Rattus norvegicus (Rat).